The primary structure comprises 110 residues: UPF0122 protein gbs1018 (110 aa).

It belongs to the UPF0122 family.

In terms of biological role, might take part in the signal recognition particle (SRP) pathway. This is inferred from the conservation of its genetic proximity to ftsY/ffh. May be a regulatory protein. This is UPF0122 protein gbs1018 from Streptococcus agalactiae serotype III (strain NEM316).